A 166-amino-acid polypeptide reads, in one-letter code: Probable calcium-binding protein CML17 (166 aa).

EF-hand domains lie at 12-47 (EQINELREIFRSFDRNKDGSLTQLELGSLLRALGVK), 48-83 (PSPDQFETLIDKADTKSNGLVEFPEFVALVSPELLS), 91-126 (YTEEQLLRLFRIFDTDGNGFITAAELAHSMAKLGHA), and 127-162 (LTVAELTGMIKEADSDGDGRINFQEFAKAINSAAFD). Residues Asp25, Asn27, Asp29, Ser31, and Glu36 each contribute to the Ca(2+) site. Positions 104, 106, 108, 115, 140, 142, 144, 146, and 151 each coordinate Ca(2+).

Potential calcium sensor. The sequence is that of Probable calcium-binding protein CML17 (CML17) from Arabidopsis thaliana (Mouse-ear cress).